Here is a 590-residue protein sequence, read N- to C-terminus: AT-rich interactive domain-containing protein 5A (590 aa).

The disordered stretch occupies residues Met-1–Glu-52. Residues Met-1–Asn-294 form an interaction with SOX9 region. Residue Ser-24 is modified to Phosphoserine. A compositionally biased stretch (polar residues) spans Arg-33–Asp-42. Positions Gln-50–Lys-142 constitute an ARID domain. Residues Lys-80 and Lys-89 each participate in a glycyl lysine isopeptide (Lys-Gly) (interchain with G-Cter in ubiquitin) cross-link. Positions Leu-141–Ala-229 are disordered. The span at Met-160–Glu-186 shows a compositional bias: basic and acidic residues. The span at Gln-187–Arg-210 shows a compositional bias: polar residues. Phosphoserine occurs at positions 253 and 283. Disordered stretches follow at residues Glu-275–Ala-323, Gly-367–Arg-402, and Val-419–Glu-443. The span at Gly-367 to His-381 shows a compositional bias: basic and acidic residues. Ser-433 and Ser-458 each carry phosphoserine.

As to quaternary structure, interacts with SOX9. Interacts with ESR1. Interacts with RORC. In terms of processing, phosphorylated by MAPK14 on serine residues involving a TLR4 signaling pathway upon lipopolysaccharide (LPS) stimulation leading to its ubiquitination and proteasomal degradation. Post-translationally, ubiquitinated leading to proteasomal degradation; involving WWP1 linked to MAPK14-mediated phosphorylation upon LPS stimulation. In terms of tissue distribution, expressed in T cells (at protein level). Expressed at high levels in cartilage, heart, testis and bone.

It localises to the nucleus. Functionally, DNA-binding protein that may regulate transcription and act as a repressor by binding to AT-rich stretches in the promoter region of target genes. May positively regulate chondrocyte-specific transcription such as of COL2A1 in collaboration with SOX9 and positively regulate histone H3 acetylation at chondrocyte-specific genes. May stimulate early-stage chondrocyte differentiation and inhibit later stage differention. Can repress ESR1-mediated transcriptional activation; proposed to act as corepressor for selective nuclear hormone receptors. As an RNA-binding protein, involved in the regulation of inflammatory response by stabilizing selective inflammation-related mRNAs, such as STAT3 and TBX21. Also stabilizes IL6 mRNA. Binds to stem loop structures located in the 3'UTRs of IL6, STAT3 and TBX21 mRNAs; at least for STAT3 prevents binding of ZC3H12A to the mRNA stem loop structure thus inhibiting its degradation activity. Contributes to elevated IL6 levels possibly implicated in autoimmunity processes. IL6-dependent stabilization of STAT3 mRNA may promote differentiation of naive CD4+ T-cells into T-helper Th17 cells. In CD4+ T-cells may also inhibit RORC-induced Th17 cell differentiation independently of IL6 signaling. Stabilization of TBX21 mRNA contributes to elevated interferon-gamma secretion in Th1 cells possibly implicated in the establishment of septic shock. Stabilizes TNFRSF4/OX40 mRNA by binding to the conserved stem loop structure in its 3'UTR; thereby competing with the mRNA-destabilizing functions of RC3H1 and endoribonuclease ZC3H12A. The protein is AT-rich interactive domain-containing protein 5A (Arid5a) of Mus musculus (Mouse).